Reading from the N-terminus, the 122-residue chain is Acidic phospholipase A2 (122 aa).

Disulfide bonds link C26-C115, C28-C44, C43-C95, C49-C122, C50-C88, C57-C81, and C75-C86. Positions 27, 29, and 31 each coordinate Ca(2+). H47 is an active-site residue. D48 is a Ca(2+) binding site. D89 is a catalytic residue.

Ca(2+) is required as a cofactor. In terms of tissue distribution, expressed by the venom gland.

Its subcellular location is the secreted. The catalysed reaction is a 1,2-diacyl-sn-glycero-3-phosphocholine + H2O = a 1-acyl-sn-glycero-3-phosphocholine + a fatty acid + H(+). Functionally, PLA2 catalyzes the calcium-dependent hydrolysis of the 2-acyl groups in 3-sn-phosphoglycerides. This Lachesis stenophrys (Central American bushmaster) protein is Acidic phospholipase A2.